The primary structure comprises 201 residues: 3-isopropylmalate dehydratase small subunit 1 (201 aa).

This sequence belongs to the LeuD family. LeuD type 1 subfamily. Heterodimer of LeuC and LeuD.

It carries out the reaction (2R,3S)-3-isopropylmalate = (2S)-2-isopropylmalate. Its pathway is amino-acid biosynthesis; L-leucine biosynthesis; L-leucine from 3-methyl-2-oxobutanoate: step 2/4. Its function is as follows. Catalyzes the isomerization between 2-isopropylmalate and 3-isopropylmalate, via the formation of 2-isopropylmaleate. The sequence is that of 3-isopropylmalate dehydratase small subunit 1 from Salmonella typhimurium (strain LT2 / SGSC1412 / ATCC 700720).